The following is a 742-amino-acid chain: Zinc finger protein 700 (742 aa).

Residues 1–20 form a disordered region; the sequence is MPCCSHRSCREDPGTSESRE. Over residues 8 to 20 the composition is skewed to basic and acidic residues; sequence SCREDPGTSESRE. Residues 24 to 104 enclose the KRAB domain; sequence VAFEDVAVNF…KEDSHCGETF (81 aa). 9 C2H2-type zinc fingers span residues 194–216, 222–244, 250–272, 278–300, 306–328, 362–384, 390–412, 418–440, and 446–468; these read YACK…MVMH, YKCK…ERTH, YECK…ERTH, YECS…ERSH, YQCK…ERTH, YKCK…EKTH, YKCK…ERIH, YECK…GGTH, and YECK…GRTH. The segment at 474–502 adopts a C2H2-type 10; degenerate zinc-finger fold; it reads YECKECGKAFRYVKHLQIHERTEKHIRMP. C2H2-type zinc fingers lie at residues 508 to 530, 536 to 558, 564 to 586, 592 to 614, 620 to 642, 648 to 670, 676 to 698, and 704 to 726; these read YKCS…EKTH, YECN…ERTH, YECK…ERTH, YECK…GRTH, YECK…ERKH, and YECK…ARTH.

It belongs to the krueppel C2H2-type zinc-finger protein family.

It localises to the nucleus. Its function is as follows. May be involved in transcriptional regulation. The protein is Zinc finger protein 700 (ZNF700) of Homo sapiens (Human).